The primary structure comprises 516 residues: MAFESLTERLQGVFKNLRGKRKLSEKDVQEVTKEIRLALLEADVALPVVKEFIKRVRKRAVGHEVIDTLDPSQQIIKIVNEELTAVLGSETAEIEKSSKIPTIIMMVGLQGAGKTTFAGKLANKLVKEENARPLMIAADIYRPAAIDQLKTLGQQINVPVFDMGTEHSAVEIVSQGLAQAKENRNDYVLIDTAGRLQIDEKLMTELRDIKALANPNEILLVVDSMIGQEAANVAREFNQQLEVTGVILTKIDGDTRGGAALSVRQITGKPIKFTGTGEKITDIETFHPDRMSSRILGMGDLLTLIEKASQDYDEQKSAELAEKMRENSFDFNDFIEQLDQVQNMGSMEDILKMIPGMANNPALANVKVDEGEIARKRAIVSSMTPEERENPDLLTPSRRRRIASGSGNTFVNVNKFIKDFNQAKKMMQGVMSGDMNKVMKQMGINPNNMPKNMDSSALEGMMGQGGMPDMSELSGTNMDVSQMFGGGLKGKVGEFAMKQSMKKMAKRMKKAKKRKK.

GTP is bound by residues 108 to 115, 191 to 195, and 249 to 252; these read GLQGAGKT, DTAGR, and TKID. A disordered region spans residues 383–405; it reads MTPEERENPDLLTPSRRRRIASG.

Belongs to the GTP-binding SRP family. SRP54 subfamily. As to quaternary structure, part of the signal recognition particle protein translocation system, which is composed of SRP and FtsY.

Its subcellular location is the cytoplasm. The catalysed reaction is GTP + H2O = GDP + phosphate + H(+). Its function is as follows. Involved in targeting and insertion of nascent membrane proteins into the cytoplasmic membrane. Binds to the hydrophobic signal sequence of the ribosome-nascent chain (RNC) as it emerges from the ribosomes. The SRP-RNC complex is then targeted to the cytoplasmic membrane where it interacts with the SRP receptor FtsY. This is Signal recognition particle protein from Streptococcus mutans serotype c (strain ATCC 700610 / UA159).